The chain runs to 516 residues: DNA topoisomerase large subunit (516 aa).

128–136 (VTGGMNGVG) contributes to the ATP binding site. A DNA-binding region spans residues 369–400 (AALARKLAAEKAAETKAAKKASKAKVHKHIKA).

The protein belongs to the type II topoisomerase family. Part of the DNA topoisomerase complex made of gp39, gp52 and gp60. Requires Mg(2+) as cofactor.

It carries out the reaction ATP-dependent breakage, passage and rejoining of double-stranded DNA.. Its function is as follows. Large subunit of the DNA topoisomerase that untwists superhelical DNA. Controls of topological states of double-stranded DNA by transient breakage and subsequent rejoining of DNA strands. The protein is DNA topoisomerase large subunit (39) of Escherichia coli (Bacteriophage T4).